Reading from the N-terminus, the 378-residue chain is MTINTKNIVVVGAGVFGVSVANHLYRELGGTYAIKLVTASNYVYFLPSAVRLTVSKDYTKSILPLKNVLDSGIEVIKDTAASFDDKEVVLGSDRAIKFDILVLATGSKWADPIGSTYTFGDNYKEYFEREASRISDADHILFLGGGFVNCELAGELLFKYLEEIRSGKKRISIIHNSDKLLPDSGLYNDTLRKNVTDYLSKNGITLYLNTVGASLDTSPKRIFLGEGSSKYIDADLIYRGVGISPNVPVNSISDLCDKKGFIQVEKNFRVKAVEAGNVFAIGDVTNFRYHGLVKRDNWVDVLTRNVISSLQEGTEASLVDADCLETGHAPSGVSLGPNAGFGQFPLPLLGTINIPSFLISRAKSKNLFSDKMEPLFKK.

Residues 7 to 25 (NIVVVGAGVFGVSVANHLY) form a helical membrane-spanning segment. FAD contacts are provided by residues 12-16 (GAGVF), Arg-51, Lys-56, and Asp-283.

This sequence belongs to the FAD-dependent oxidoreductase family. FAD is required as a cofactor.

It localises to the mitochondrion outer membrane. Its subcellular location is the nucleus. Functionally, putative FAD-dependent oxidoreductase involved in the resistance to cercosporin and other singlet oxygen-generating photosensitizers. Translocates from mitochondria to the nucleus under apoptotic conditions, where it degrades DNA and induces apoptosis. The protein is Apoptosis-inducing factor 1 (AIF1) of Saccharomyces cerevisiae (strain ATCC 204508 / S288c) (Baker's yeast).